We begin with the raw amino-acid sequence, 104 residues long: UPF0213 protein PA3854 (104 aa).

Positions 13 to 88 (KCWSVYLVRA…KALSKRAKER (76 aa)) constitute a GIY-YIG domain.

This sequence belongs to the UPF0213 family.

The polypeptide is UPF0213 protein PA3854 (Pseudomonas aeruginosa (strain ATCC 15692 / DSM 22644 / CIP 104116 / JCM 14847 / LMG 12228 / 1C / PRS 101 / PAO1)).